We begin with the raw amino-acid sequence, 35 residues long: MRIAKIGVIALFLFMAFGGIGGVMLAGYTFILRAG.

Residues 6–26 traverse the membrane as a helical segment; that stretch reads IGVIALFLFMAFGGIGGVMLA.

It belongs to the UPF0387 family.

It localises to the cell inner membrane. The protein is UPF0387 membrane protein YohO of Escherichia coli O8 (strain IAI1).